The primary structure comprises 134 residues: Ribosome-binding factor A (134 aa).

It belongs to the RbfA family. In terms of assembly, monomer. Binds 30S ribosomal subunits, but not 50S ribosomal subunits or 70S ribosomes.

The protein resides in the cytoplasm. In terms of biological role, one of several proteins that assist in the late maturation steps of the functional core of the 30S ribosomal subunit. Associates with free 30S ribosomal subunits (but not with 30S subunits that are part of 70S ribosomes or polysomes). Required for efficient processing of 16S rRNA. May interact with the 5'-terminal helix region of 16S rRNA. In Parasynechococcus marenigrum (strain WH8102), this protein is Ribosome-binding factor A.